The following is a 509-amino-acid chain: Protein OS-9 homolog (509 aa).

Positions 1-23 (MRRQSRIVASLLVLACASSGAFA) are cleaved as a signal peptide. A compositionally biased stretch (polar residues) spans 64 to 74 (SPDLNDISEQT). Positions 64-91 (SPDLNDISEQTPLKDESEESIRDGSSGE) are disordered. Residues 75–91 (PLKDESEESIRDGSSGE) show a composition bias toward basic and acidic residues. A glycan (N-linked (GlcNAc...) asparagine) is linked at asparagine 120. The MRH domain maps to 151 to 291 (GKCLYYISGW…LIYTPRLCND (141 aa)). A disulfide bond links cysteine 153 and cysteine 166. Residues tryptophan 160, tryptophan 161, glutamine 173, aspartate 246, arginine 252, glutamate 273, and tyrosine 279 each contribute to the a mannooligosaccharide derivative site. 2 cysteine pairs are disulfide-bonded: cysteine 245/cysteine 277 and cysteine 260/cysteine 289. Residues 433–509 (GVVDTDEDEE…GSEEIFKDEL (77 aa)) form a disordered region. Residues 436-451 (DTDEDEEDGYENEEGE) are compositionally biased toward acidic residues. Residues 452-461 (TDKREQRENT) are compositionally biased toward basic and acidic residues. Positions 489-502 (RSEDGEDPDVDGSE) are enriched in acidic residues. The short motif at 506–509 (KDEL) is the Prevents secretion from ER element.

It belongs to the OS-9 family. In terms of assembly, interacts with missfolded ER lumenal proteins.

The protein resides in the endoplasmic reticulum membrane. In terms of biological role, lectin involved in the quality control of the secretory pathway. As a member of the endoplasmic reticulum-associated degradation lumenal (ERAD-L) surveillance system, targets misfolded endoplasmic reticulum lumenal glycoproteins for degradation. In Emericella nidulans (strain FGSC A4 / ATCC 38163 / CBS 112.46 / NRRL 194 / M139) (Aspergillus nidulans), this protein is Protein OS-9 homolog (yos9).